We begin with the raw amino-acid sequence, 174 residues long: Small ribosomal subunit protein bS16 (174 aa).

The tract at residues 81–174 (QRFTGEPAPP…DATTDATPSA (94 aa)) is disordered. A compositionally biased stretch (pro residues) spans 87–97 (PAPPPMKTAPP). Basic and acidic residues predominate over residues 98-118 (KPDKKALFEAAAKEAAGEPRA). Residues 135-158 (ETTPAAEAAPDAAASADEPAGGAS) show a composition bias toward low complexity. Over residues 160–174 (AAESQDATTDATPSA) the composition is skewed to polar residues.

Belongs to the bacterial ribosomal protein bS16 family.

This Acidothermus cellulolyticus (strain ATCC 43068 / DSM 8971 / 11B) protein is Small ribosomal subunit protein bS16.